A 598-amino-acid chain; its full sequence is Elongation factor 4 (598 aa).

Residues 5-187 (ANIRNFSIIA…ALVEFIPAPT (183 aa)) form the tr-type G domain. Residues 17 to 22 (DHGKST) and 134 to 137 (NKID) each bind GTP.

This sequence belongs to the TRAFAC class translation factor GTPase superfamily. Classic translation factor GTPase family. LepA subfamily.

It localises to the cell inner membrane. The enzyme catalyses GTP + H2O = GDP + phosphate + H(+). Its function is as follows. Required for accurate and efficient protein synthesis under certain stress conditions. May act as a fidelity factor of the translation reaction, by catalyzing a one-codon backward translocation of tRNAs on improperly translocated ribosomes. Back-translocation proceeds from a post-translocation (POST) complex to a pre-translocation (PRE) complex, thus giving elongation factor G a second chance to translocate the tRNAs correctly. Binds to ribosomes in a GTP-dependent manner. This Psychrobacter cryohalolentis (strain ATCC BAA-1226 / DSM 17306 / VKM B-2378 / K5) protein is Elongation factor 4.